The following is a 632-amino-acid chain: Arginine--tRNA ligase (632 aa).

Positions 120-130 (ANPIHPLHIGH) match the 'HIGH' region motif.

It belongs to the class-I aminoacyl-tRNA synthetase family.

It is found in the cytoplasm. The catalysed reaction is tRNA(Arg) + L-arginine + ATP = L-arginyl-tRNA(Arg) + AMP + diphosphate. In Pyrobaculum islandicum (strain DSM 4184 / JCM 9189 / GEO3), this protein is Arginine--tRNA ligase.